Reading from the N-terminus, the 312-residue chain is Tyrosine recombinase XerC (312 aa).

In terms of domain architecture, Core-binding (CB) spans proline 10 to glutamate 101. One can recognise a Tyr recombinase domain in the interval serine 122 to glutamate 306. Active-site residues include arginine 165, lysine 190, histidine 258, arginine 261, and histidine 284. Residue tyrosine 293 is the O-(3'-phospho-DNA)-tyrosine intermediate of the active site.

This sequence belongs to the 'phage' integrase family. XerC subfamily. Forms a cyclic heterotetrameric complex composed of two molecules of XerC and two molecules of XerD.

The protein resides in the cytoplasm. Functionally, site-specific tyrosine recombinase, which acts by catalyzing the cutting and rejoining of the recombining DNA molecules. The XerC-XerD complex is essential to convert dimers of the bacterial chromosome into monomers to permit their segregation at cell division. It also contributes to the segregational stability of plasmids. The protein is Tyrosine recombinase XerC of Mesorhizobium japonicum (strain LMG 29417 / CECT 9101 / MAFF 303099) (Mesorhizobium loti (strain MAFF 303099)).